A 632-amino-acid chain; its full sequence is Chaperone protein DnaK (632 aa).

The residue at position 198 (Thr198) is a Phosphothreonine; by autocatalysis. The interval Arg524–Arg557 is disordered.

The protein belongs to the heat shock protein 70 family.

Its function is as follows. Acts as a chaperone. The polypeptide is Chaperone protein DnaK (Nitrobacter hamburgensis (strain DSM 10229 / NCIMB 13809 / X14)).